Consider the following 109-residue polypeptide: Spermidine export protein MdtI (109 aa).

A run of 4 helical transmembrane segments spans residues 6–26, 36–56, 64–84, and 88–108; these read WVHA…NVFL, IFGL…SQAV, AYAL…WILF, and LNRK…MVKL.

The protein belongs to the drug/metabolite transporter (DMT) superfamily. Small multidrug resistance (SMR) (TC 2.A.7.1) family. MdtI subfamily. Forms a complex with MdtJ.

Its subcellular location is the cell inner membrane. Functionally, catalyzes the excretion of spermidine. This is Spermidine export protein MdtI from Escherichia coli O139:H28 (strain E24377A / ETEC).